We begin with the raw amino-acid sequence, 379 residues long: Cytochrome b (379 aa).

4 consecutive transmembrane segments (helical) span residues 33–53 (FGSL…FLAM), 77–98 (WTIR…FIHV), 113–133 (WNVG…GYVL), and 178–198 (FFAL…IHLL). The heme b site is built by His-83 and His-97. Positions 182 and 196 each coordinate heme b. His-201 contributes to the a ubiquinone binding site. A run of 4 helical transmembrane segments spans residues 226 to 246 (TKDF…ALFY), 288 to 308 (LGGV…PFLQ), 320 to 340 (LSQF…WIGG), and 347 to 367 (FINI…FIMP).

It belongs to the cytochrome b family. In terms of assembly, the cytochrome bc1 complex contains 11 subunits: 3 respiratory subunits (MT-CYB, CYC1 and UQCRFS1), 2 core proteins (UQCRC1 and UQCRC2) and 6 low-molecular weight proteins (UQCRH/QCR6, UQCRB/QCR7, UQCRQ/QCR8, UQCR10/QCR9, UQCR11/QCR10 and a cleavage product of UQCRFS1). This cytochrome bc1 complex then forms a dimer. Heme b serves as cofactor.

It localises to the mitochondrion inner membrane. Functionally, component of the ubiquinol-cytochrome c reductase complex (complex III or cytochrome b-c1 complex) that is part of the mitochondrial respiratory chain. The b-c1 complex mediates electron transfer from ubiquinol to cytochrome c. Contributes to the generation of a proton gradient across the mitochondrial membrane that is then used for ATP synthesis. This is Cytochrome b (MT-CYB) from Lepilemur ankaranensis (Ankarana sportive lemur).